A 691-amino-acid polypeptide reads, in one-letter code: Pentatricopeptide repeat-containing protein ATP4, chloroplastic (691 aa).

Residues 1-17 (MASLPLCRSPSSLLPSW) show a composition bias toward low complexity. A chloroplast-targeting transit peptide spans 1-35 (MASLPLCRSPSSLLPSWPHRPISASFNPKNPSSPV). Residues 1 to 76 (MASLPLCRSP…SSNTRFLWVN (76 aa)) are disordered. Positions 24 to 33 (ASFNPKNPSS) are enriched in polar residues. Over residues 45–56 (PPQPQDPSPPSD) the composition is skewed to pro residues. Residues 61 to 76 (GTRPSSSSNTRFLWVN) are compositionally biased toward polar residues. PPR repeat units follow at residues 163 to 197 (KVIL…GVQP), 198 to 232 (DNAT…GCSP), 233 to 267 (DMLT…KWQL), 268 to 302 (DPVI…GVRP), 303 to 337 (NLVV…QVQP), 338 to 372 (SRAT…AMGI), 373 to 403 (DVML…MKAS), 411 to 445 (DSWS…GFKP), 446 to 480 (NIFV…GIIP), and 546 to 580 (KMPY…GIYA). The Smr domain maps to 592–677 (LHLRGLSVGA…WFLTTNVAAK (86 aa)).

Belongs to the PPR family. P subfamily.

The protein resides in the plastid. It is found in the chloroplast stroma. In terms of biological role, involved in translation and accumulation of chloroplast ATP synthase subunits. Interacts with the 5'-UTR of the chloroplast bicistronic atpB and atpE mRNA and activates its translation by facilitating ribosome association with the mRNA. Required for accumulation and activity of the chloroplast ATP synthase. Enhances atpA translation and is required for accumulation of specific processed atpF and psaJ transcripts. Required for the stabilization of bicistronic rpl16 and rpl14 mRNAs. The protein is Pentatricopeptide repeat-containing protein ATP4, chloroplastic of Zea mays (Maize).